The chain runs to 501 residues: MDKQKFGLTAKKEEDFSEWYVQVITKGEMIDYYAIKGCYVMRPLGQFVWKCIHKWFTKKIEELGVQECYFPMLVPKSMLEMEKDHVENFSPEVAWITKCGNQVLEDPVAVRPTSETIIYPSFSKWIRSHRDLPLKLNQWCSVLRWELHGTLPFIRGKEFLWQEGHTAFLTRKESDEEVLAILDLYSQIYSELLAVPVIKGRKSENEKFGGADYTTSIEAFIPGSGRGVQAATSHSLGQNFSRMFDIKADTDEGSESSSFVYQNSWGITTRSIGIAAMIHSDNLGLVLPPRVAMTQVVIVPCGITTASSKDDTESLRAYINGVCVQLKNSGVRVHLDDRSNVTAGFKFNHWEIRGVPLRLEIGFKDMASSEACLVRRDTRAKKQVSVEGIAHTVMEEIDTMHNDMLARATSERDSRISYVKSFEEFMSALDNKNIIMAPWCGISECEIEIKSRSTRADPRSDVVSTGAKTLCIPYGSKPCDGMKCINCNSQAVHYTLFGRSY.

The protein belongs to the class-II aminoacyl-tRNA synthetase family.

It catalyses the reaction tRNA(Pro) + L-proline + ATP = L-prolyl-tRNA(Pro) + AMP + diphosphate. The polypeptide is Proline--tRNA ligase (Encephalitozoon cuniculi (strain GB-M1) (Microsporidian parasite)).